A 141-amino-acid polypeptide reads, in one-letter code: Meiotically up-regulated gene 118 protein (141 aa).

The segment covering 106–115 (LSSQKSARQP) has biased composition (polar residues). The tract at residues 106–141 (LSSQKSARQPTKTVASSSSSSSKSTTVSKSSSKSQV) is disordered. Positions 116–141 (TKTVASSSSSSSKSTTVSKSSSKSQV) are enriched in low complexity.

The protein resides in the nucleus. Functionally, has a role in meiosis. The sequence is that of Meiotically up-regulated gene 118 protein (mug118) from Schizosaccharomyces pombe (strain 972 / ATCC 24843) (Fission yeast).